The chain runs to 228 residues: Cytidylate kinase (228 aa).

11 to 19 lines the ATP pocket; it reads GPAGTGKSS.

It belongs to the cytidylate kinase family. Type 1 subfamily.

Its subcellular location is the cytoplasm. The enzyme catalyses CMP + ATP = CDP + ADP. It catalyses the reaction dCMP + ATP = dCDP + ADP. The sequence is that of Cytidylate kinase from Mycolicibacterium paratuberculosis (strain ATCC BAA-968 / K-10) (Mycobacterium paratuberculosis).